Here is a 550-residue protein sequence, read N- to C-terminus: Dihydroxy-acid dehydratase (550 aa).

Asp-78 contributes to the Mg(2+) binding site. Cys-119 is a [2Fe-2S] cluster binding site. Residues Asp-120 and Lys-121 each coordinate Mg(2+). An N6-carboxylysine modification is found at Lys-121. Cys-191 serves as a coordination point for [2Fe-2S] cluster. Glu-440 is a binding site for Mg(2+). The Proton acceptor role is filled by Ser-466.

This sequence belongs to the IlvD/Edd family. In terms of assembly, homodimer. It depends on [2Fe-2S] cluster as a cofactor. The cofactor is Mg(2+).

The catalysed reaction is (2R)-2,3-dihydroxy-3-methylbutanoate = 3-methyl-2-oxobutanoate + H2O. It carries out the reaction (2R,3R)-2,3-dihydroxy-3-methylpentanoate = (S)-3-methyl-2-oxopentanoate + H2O. The protein operates within amino-acid biosynthesis; L-isoleucine biosynthesis; L-isoleucine from 2-oxobutanoate: step 3/4. It participates in amino-acid biosynthesis; L-valine biosynthesis; L-valine from pyruvate: step 3/4. Functionally, functions in the biosynthesis of branched-chain amino acids. Catalyzes the dehydration of (2R,3R)-2,3-dihydroxy-3-methylpentanoate (2,3-dihydroxy-3-methylvalerate) into 2-oxo-3-methylpentanoate (2-oxo-3-methylvalerate) and of (2R)-2,3-dihydroxy-3-methylbutanoate (2,3-dihydroxyisovalerate) into 2-oxo-3-methylbutanoate (2-oxoisovalerate), the penultimate precursor to L-isoleucine and L-valine, respectively. The chain is Dihydroxy-acid dehydratase from Methanococcus maripaludis (strain C7 / ATCC BAA-1331).